A 294-amino-acid polypeptide reads, in one-letter code: Cytidine deaminase (294 aa).

CMP/dCMP-type deaminase domains are found at residues 48-168 (DEDA…FGPK) and 186-294 (LTGD…VLLA). Substrate is bound at residue 89–91 (NME). H102 is a binding site for Zn(2+). The Proton donor role is filled by E104. Positions 129 and 132 each coordinate Zn(2+).

The protein belongs to the cytidine and deoxycytidylate deaminase family. Homodimer. Zn(2+) serves as cofactor.

It catalyses the reaction cytidine + H2O + H(+) = uridine + NH4(+). It carries out the reaction 2'-deoxycytidine + H2O + H(+) = 2'-deoxyuridine + NH4(+). In terms of biological role, this enzyme scavenges exogenous and endogenous cytidine and 2'-deoxycytidine for UMP synthesis. The chain is Cytidine deaminase from Shigella dysenteriae serotype 1 (strain Sd197).